The sequence spans 352 residues: C-C chemokine receptor type 5 (352 aa).

Over 1 to 30 (MDYQVSSPTYDIDYYTSEPCQKINVKQIAA) the chain is Extracellular. Position 3 is a sulfotyrosine (Tyr-3). Residues Ser-6 and Ser-7 are each glycosylated (O-linked (GalNAc...) serine). Residues Tyr-10, Tyr-14, and Tyr-15 each carry the sulfotyrosine modification. Cystine bridges form between Cys-20–Cys-269 and Cys-101–Cys-178. Residues 31 to 58 (RLLPPLYSLVFIFGFVGNMLVILILINC) form a helical membrane-spanning segment. The Cytoplasmic portion of the chain corresponds to 59 to 68 (KRLKSMTDIY). The chain crosses the membrane as a helical span at residues 69–89 (LLNLAISDLFFLLTVPFWAHY). The Extracellular portion of the chain corresponds to 90–102 (AAAQWDFGNTMCQ). Residues 103–124 (LLTGLYFIGFFSGIFFIILLTI) traverse the membrane as a helical segment. Over 125-141 (DRYLAIVHAVFALKART) the chain is Cytoplasmic. A helical membrane pass occupies residues 142–166 (VTFGVVTSVITWVVAVFASLPGIIF). Residues 167–198 (TRSQKEGLHYTCSSHFPYSQYQFWKNFQTLKI) are Extracellular-facing. Residues 199–218 (VILGLVLPLLVMVICYSGIL) traverse the membrane as a helical segment. At 219-235 (KTLLRCRNEKKRHRAVR) the chain is on the cytoplasmic side. Residues 236-260 (LIFTIMIVYFLFWAPYNIVLLLNTF) form a helical membrane-spanning segment. Over 261–277 (QEFFGLNNCSSSNRLDQ) the chain is Extracellular. The chain crosses the membrane as a helical span at residues 278–301 (AMQVTETLGMTHCCINPIIYAFVG). Residues 302-352 (EKFRNYLLVFFQKHIAKRFCKCCSIFQQEAPERASSVYTRSTGEQEISVGL) are Cytoplasmic-facing. S-palmitoyl cysteine attachment occurs at residues Cys-321, Cys-323, and Cys-324. Phosphoserine; by BARK1 occurs at positions 336, 337, 342, and 349.

It belongs to the G-protein coupled receptor 1 family. As to quaternary structure, interacts with PRAF2. Efficient ligand binding to CCL3/MIP-1alpha and CCL4/MIP-1beta requires sulfation, O-glycosylation and sialic acid modifications. Glycosylation on Ser-6 is required for efficient binding of CCL4. Interacts with GRK2. Interacts with ARRB1 and ARRB2. Interacts with CNIH4. Interacts with S100A4; this interaction stimulates T-lymphocyte chemotaxis. Post-translationally, sulfated on at least 2 of the N-terminal tyrosines. Sulfation is required for efficient binding of the chemokines, CCL3 and CCL4. In terms of processing, palmitoylation in the C-terminal is important for cell surface expression. Phosphorylation on serine residues in the C-terminal is stimulated by binding CC chemokines especially by APO-RANTES. Post-translationally, O-glycosylated, but not N-glycosylated. Ser-6 appears to be the major site even if Ser-7 may be also O-glycosylated. Also sialylated glycans present which contribute to chemokine binding. Thr-16 and Ser-17 may also be glycosylated and, if so, with small moieties such as a T-antigen.

It localises to the cell membrane. Its function is as follows. Receptor for a number of inflammatory CC-chemokines including CCL3/MIP-1-alpha, CCL4/MIP-1-beta and RANTES and subsequently transduces a signal by increasing the intracellular calcium ion level. May play a role in the control of granulocytic lineage proliferation or differentiation. Participates in T-lymphocyte migration to the infection site by acting as a chemotactic receptor. This Pongo abelii (Sumatran orangutan) protein is C-C chemokine receptor type 5 (CCR5).